Here is a 299-residue protein sequence, read N- to C-terminus: MSKTLSVDKSQLRSPWSTYWTLTKPKVVALMLLTSVVGMSLAPHEHFTWHQALIALVGIALMAGSAAAFNHLIDRRIDAKMARTYRRPLPKGDVSPFNVLLFALLIGSLGFLSLMLWVNSLTAYLTFASLLGYAVVYTLYLKRATPQNIVIAGIAGAMPPLLGWTSITGELHPHAWLLVMIIFIWTPPHFWALAIHRKEDYAKVNIPMLPVTHGVEYTKTSILLYAILLALVCMLPVLVGMASYLYLFSALVLNVCFVRYAIKLKFRAEERTAIEMFRFSIYFLLLLFCALLLDQQLAL.

Transmembrane regions (helical) follow at residues 27–47 (VVAL…HEHF), 53–73 (LIAL…NHLI), 97–117 (FNVL…LMLW), 121–141 (LTAY…TLYL), 149–169 (IVIA…SITG), 175–195 (AWLL…ALAI), 222–242 (ILLY…VGMA), 244–264 (YLYL…AIKL), and 273–293 (AIEM…ALLL).

It belongs to the UbiA prenyltransferase family. Protoheme IX farnesyltransferase subfamily.

The protein localises to the cell inner membrane. The catalysed reaction is heme b + (2E,6E)-farnesyl diphosphate + H2O = Fe(II)-heme o + diphosphate. The protein operates within porphyrin-containing compound metabolism; heme O biosynthesis; heme O from protoheme: step 1/1. Its function is as follows. Converts heme B (protoheme IX) to heme O by substitution of the vinyl group on carbon 2 of heme B porphyrin ring with a hydroxyethyl farnesyl side group. This chain is Protoheme IX farnesyltransferase, found in Vibrio vulnificus (strain YJ016).